The following is a 230-amino-acid chain: Complex I assembly factor TMEM126B, mitochondrial (230 aa).

Helical transmembrane passes span 70-92 (LNIH…ANLV), 107-126 (YASL…KLFV), 139-161 (SCVL…ALAF), and 196-218 (AMAI…HYNI).

Belongs to the TMEM126 family. Part of the mitochondrial complex I assembly/MCIA complex that comprises at least the core subunits TMEM126B, NDUFAF1, ECSIT and ACAD9 and complement subunits such as COA1 and TMEM186. Associates with the intermediate 370 kDa subcomplex of incompletely assembled complex I. Interacts with TMEM70.

It is found in the mitochondrion membrane. Functionally, as part of the MCIA complex, involved in the assembly of the mitochondrial complex I. Participates in constructing the membrane arm of complex I. The chain is Complex I assembly factor TMEM126B, mitochondrial from Mus musculus (Mouse).